Here is a 341-residue protein sequence, read N- to C-terminus: MKFVDEALIKVEAGKGGNGCLSFRREKFIPRGGPDGGDGGDGGSIYFEASSDLNTLIDFRYTRQYKAENGQSGMGGNCTGKKGDDLTIKVPVGTMVYDADTGELLADISQPGIPVLIAQGGFHGLGNTRYKSSVNRSPRQTTPGSPGESRNLRLELRVLADVGLLGLPNAGKSTLIRAVSSSKAKVADYPFTTLHPGLGVVRVSPYKSFVMADIPGLIEGAAQGAGLGHRFLKHLSRTCVLLHVIDIAPLDGSDPVADAKAILNELTQYNPDLLNKPRWLVLNKIDMLPDEKEREEKIQSIIKGLEWKDKVFSISAIESKGTQELCYALMQLIDEMKESEA.

The 159-residue stretch at 1 to 159 (MKFVDEALIK…RNLRLELRVL (159 aa)) folds into the Obg domain. Residues 128–150 (TRYKSSVNRSPRQTTPGSPGESR) form a disordered region. The segment covering 129 to 144 (RYKSSVNRSPRQTTPG) has biased composition (polar residues). Residues 160-334 (ADVGLLGLPN…LCYALMQLID (175 aa)) enclose the OBG-type G domain. Residues 166–173 (GLPNAGKS), 191–195 (FTTLH), 213–216 (DIPG), 283–286 (NKID), and 315–317 (SAI) each bind GTP. Positions 173 and 193 each coordinate Mg(2+).

It belongs to the TRAFAC class OBG-HflX-like GTPase superfamily. OBG GTPase family. In terms of assembly, monomer. Mg(2+) serves as cofactor.

It localises to the cytoplasm. In terms of biological role, an essential GTPase which binds GTP, GDP and possibly (p)ppGpp with moderate affinity, with high nucleotide exchange rates and a fairly low GTP hydrolysis rate. Plays a role in control of the cell cycle, stress response, ribosome biogenesis and in those bacteria that undergo differentiation, in morphogenesis control. This Legionella pneumophila subsp. pneumophila (strain Philadelphia 1 / ATCC 33152 / DSM 7513) protein is GTPase Obg.